The primary structure comprises 426 residues: D-tagatose-1,6-bisphosphate aldolase subunit KbaZ (426 aa).

The protein belongs to the GatZ/KbaZ family. KbaZ subfamily. Forms a complex with KbaY.

It participates in carbohydrate metabolism; D-tagatose 6-phosphate degradation; D-glyceraldehyde 3-phosphate and glycerone phosphate from D-tagatose 6-phosphate: step 2/2. Component of the tagatose-1,6-bisphosphate aldolase KbaYZ that is required for full activity and stability of the Y subunit. Could have a chaperone-like function for the proper and stable folding of KbaY. When expressed alone, KbaZ does not show any aldolase activity. The sequence is that of D-tagatose-1,6-bisphosphate aldolase subunit KbaZ from Escherichia coli O1:K1 / APEC.